Reading from the N-terminus, the 590-residue chain is TPR repeat-containing protein PA4667 (590 aa).

TPR repeat units follow at residues 235 to 268 (VAPL…HPDD), 269 to 302 (KRVR…FPDD), 370 to 403 (LPAQ…QPDY), 405 to 438 (IQLY…YPED), and 508 to 541 (PAIL…YPDH).

This Pseudomonas aeruginosa (strain ATCC 15692 / DSM 22644 / CIP 104116 / JCM 14847 / LMG 12228 / 1C / PRS 101 / PAO1) protein is TPR repeat-containing protein PA4667.